The following is a 426-amino-acid chain: Glutamate-1-semialdehyde 2,1-aminomutase (426 aa).

Lysine 265 is subject to N6-(pyridoxal phosphate)lysine.

This sequence belongs to the class-III pyridoxal-phosphate-dependent aminotransferase family. HemL subfamily. As to quaternary structure, homodimer. Pyridoxal 5'-phosphate is required as a cofactor.

It is found in the cytoplasm. It catalyses the reaction (S)-4-amino-5-oxopentanoate = 5-aminolevulinate. The protein operates within porphyrin-containing compound metabolism; protoporphyrin-IX biosynthesis; 5-aminolevulinate from L-glutamyl-tRNA(Glu): step 2/2. The sequence is that of Glutamate-1-semialdehyde 2,1-aminomutase from Salmonella paratyphi A (strain ATCC 9150 / SARB42).